A 358-amino-acid polypeptide reads, in one-letter code: Probable D-xylulose reductase A (358 aa).

Zn(2+) contacts are provided by cysteine 47, histidine 72, and glutamate 73. 182–187 (GAGPVG) provides a ligand contact to NAD(+).

It belongs to the zinc-containing alcohol dehydrogenase family. Zn(2+) serves as cofactor.

It carries out the reaction xylitol + NAD(+) = D-xylulose + NADH + H(+). It functions in the pathway carbohydrate degradation; L-arabinose degradation via L-arabinitol; D-xylulose 5-phosphate from L-arabinose (fungal route): step 4/5. Functionally, xylitol dehydrogenase which catalyzes the conversion of xylitol to D-xylulose. Xylose is a major component of hemicelluloses such as xylan. Most fungi utilize D-xylose via three enzymatic reactions, xylose reductase (XR), xylitol dehydrogenase (XDH), and xylulokinase, to form xylulose 5-phosphate, which enters pentose phosphate pathway. This is Probable D-xylulose reductase A (xdhA) from Aspergillus niger (strain ATCC MYA-4892 / CBS 513.88 / FGSC A1513).